The sequence spans 560 residues: Protein DETOXIFICATION 45, chloroplastic (560 aa).

The transit peptide at 1–75 (MESSRVVVGG…QTNPDCGVVK (75 aa)) directs the protein to the chloroplast. 12 consecutive transmembrane segments (helical) span residues 109–129 (LVML…TLLM), 147–167 (VSMA…LSVA), 209–229 (ALVL…LASG), 250–270 (FLVL…LQGI), 280–300 (PVYC…LFIY), 308–328 (GAAI…LILL), 353–373 (FVLG…SMAA), 389–411 (VWLA…IASS), 426–446 (FVLK…GMSF), 466–486 (GVLF…FDGL), 495–515 (YAAC…LYAP), and 523–543 (VWVG…SRLM).

It belongs to the multi antimicrobial extrusion (MATE) (TC 2.A.66.1) family. In terms of tissue distribution, ubiquitous.

It localises to the plastid. It is found in the chloroplast membrane. This is Protein DETOXIFICATION 45, chloroplastic from Arabidopsis thaliana (Mouse-ear cress).